A 251-amino-acid polypeptide reads, in one-letter code: tRNA (guanine-N(1)-)-methyltransferase (251 aa).

S-adenosyl-L-methionine is bound by residues Gly-111 and 131-136 (LGDFVL).

It belongs to the RNA methyltransferase TrmD family. As to quaternary structure, homodimer.

The protein localises to the cytoplasm. The enzyme catalyses guanosine(37) in tRNA + S-adenosyl-L-methionine = N(1)-methylguanosine(37) in tRNA + S-adenosyl-L-homocysteine + H(+). Functionally, specifically methylates guanosine-37 in various tRNAs. This Synechococcus sp. (strain JA-2-3B'a(2-13)) (Cyanobacteria bacterium Yellowstone B-Prime) protein is tRNA (guanine-N(1)-)-methyltransferase.